The primary structure comprises 556 residues: Formate--tetrahydrofolate ligase (556 aa).

ATP is bound at residue 65-72 (TPAGEGKS).

This sequence belongs to the formate--tetrahydrofolate ligase family.

It catalyses the reaction (6S)-5,6,7,8-tetrahydrofolate + formate + ATP = (6R)-10-formyltetrahydrofolate + ADP + phosphate. Its pathway is one-carbon metabolism; tetrahydrofolate interconversion. This chain is Formate--tetrahydrofolate ligase, found in Streptococcus pneumoniae (strain 70585).